The sequence spans 258 residues: MLAKRIIPCLDVRDGQVVKGVQFRNHEIIGDIVPLAQRYAQEGADELVFYDITASSDGRTVDKSWVERIAQVIDIPFCVAGGIKTIEDAEKLFAFGADKISINSPALADPTLISRLADRFGVQAIVVGIDSWFEQETGKYWVNQYTGDETRTRQTHWQLLDWVKEVQQCGAGEIVLNMMNQDGLRNGYDLAQLKLVRGVCRVPLIASGGAGKMVHFRDAFIEAKVDGALAASVFHKQIIEIGELKSYLVQSAIEIRSE.

Active-site residues include aspartate 11 and aspartate 130.

It belongs to the HisA/HisF family. In terms of assembly, heterodimer of HisH and HisF.

It localises to the cytoplasm. The catalysed reaction is 5-[(5-phospho-1-deoxy-D-ribulos-1-ylimino)methylamino]-1-(5-phospho-beta-D-ribosyl)imidazole-4-carboxamide + L-glutamine = D-erythro-1-(imidazol-4-yl)glycerol 3-phosphate + 5-amino-1-(5-phospho-beta-D-ribosyl)imidazole-4-carboxamide + L-glutamate + H(+). Its pathway is amino-acid biosynthesis; L-histidine biosynthesis; L-histidine from 5-phospho-alpha-D-ribose 1-diphosphate: step 5/9. IGPS catalyzes the conversion of PRFAR and glutamine to IGP, AICAR and glutamate. The HisF subunit catalyzes the cyclization activity that produces IGP and AICAR from PRFAR using the ammonia provided by the HisH subunit. In Haemophilus influenzae (strain 86-028NP), this protein is Imidazole glycerol phosphate synthase subunit HisF.